We begin with the raw amino-acid sequence, 270 residues long: Hemin import ATP-binding protein HmuV (270 aa).

The region spanning 2–238 (LTVENIEVTL…VTLSQAYGCT (237 aa)) is the ABC transporter domain. 34 to 41 (GHNGSGKT) lines the ATP pocket.

This sequence belongs to the ABC transporter superfamily. Heme (hemin) importer (TC 3.A.1.14.5) family. The complex is composed of two ATP-binding proteins (HmuV), two transmembrane proteins (HmuU) and a solute-binding protein (HmuT).

The protein localises to the cell inner membrane. In terms of biological role, part of the ABC transporter complex HmuTUV involved in hemin import. Responsible for energy coupling to the transport system. This is Hemin import ATP-binding protein HmuV from Jannaschia sp. (strain CCS1).